We begin with the raw amino-acid sequence, 186 residues long: uncharacterized protein (186 aa).

3 disordered regions span residues 17 to 47 (LSGE…EETF), 77 to 105 (EDKL…AAEA), and 121 to 164 (QQAA…PVAG). Over residues 90–105 (PLAARPPSQAAAAAEA) the composition is skewed to low complexity. Acidic residues predominate over residues 136–149 (PEPDPEPADEAAEE).

This is an uncharacterized protein from Homo sapiens (Human).